The chain runs to 375 residues: Lipid-A-disaccharide synthase (375 aa).

It belongs to the LpxB family.

It carries out the reaction a lipid X + a UDP-2-N,3-O-bis[(3R)-3-hydroxyacyl]-alpha-D-glucosamine = a lipid A disaccharide + UDP + H(+). The protein operates within bacterial outer membrane biogenesis; LPS lipid A biosynthesis. Condensation of UDP-2,3-diacylglucosamine and 2,3-diacylglucosamine-1-phosphate to form lipid A disaccharide, a precursor of lipid A, a phosphorylated glycolipid that anchors the lipopolysaccharide to the outer membrane of the cell. This chain is Lipid-A-disaccharide synthase, found in Pseudomonas putida (strain GB-1).